The primary structure comprises 253 residues: Tryptophan synthase alpha chain (253 aa).

Active-site proton acceptor residues include Glu46 and Asp57.

The protein belongs to the TrpA family. Tetramer of two alpha and two beta chains.

It catalyses the reaction (1S,2R)-1-C-(indol-3-yl)glycerol 3-phosphate + L-serine = D-glyceraldehyde 3-phosphate + L-tryptophan + H2O. Its pathway is amino-acid biosynthesis; L-tryptophan biosynthesis; L-tryptophan from chorismate: step 5/5. In terms of biological role, the alpha subunit is responsible for the aldol cleavage of indoleglycerol phosphate to indole and glyceraldehyde 3-phosphate. The protein is Tryptophan synthase alpha chain of Dictyoglomus thermophilum (strain ATCC 35947 / DSM 3960 / H-6-12).